A 332-amino-acid chain; its full sequence is Beta-ketoacyl-[acyl-carrier-protein] synthase III (332 aa).

Active-site residues include cysteine 116 and histidine 257. The ACP-binding stretch occupies residues 258–262; that stretch reads QANQR. Asparagine 287 is an active-site residue.

It belongs to the thiolase-like superfamily. FabH family. Homodimer.

It localises to the cytoplasm. It carries out the reaction malonyl-[ACP] + acetyl-CoA + H(+) = 3-oxobutanoyl-[ACP] + CO2 + CoA. It participates in lipid metabolism; fatty acid biosynthesis. In terms of biological role, catalyzes the condensation reaction of fatty acid synthesis by the addition to an acyl acceptor of two carbons from malonyl-ACP. Catalyzes the first condensation reaction which initiates fatty acid synthesis and may therefore play a role in governing the total rate of fatty acid production. Possesses both acetoacetyl-ACP synthase and acetyl transacylase activities. Its substrate specificity determines the biosynthesis of branched-chain and/or straight-chain of fatty acids. This is Beta-ketoacyl-[acyl-carrier-protein] synthase III from Acaryochloris marina (strain MBIC 11017).